The sequence spans 753 residues: 5-methyltetrahydropteroyltriglutamate--homocysteine methyltransferase (753 aa).

Residues arginine 17 to lysine 20 and lysine 117 each bind 5-methyltetrahydropteroyltri-L-glutamate. L-homocysteine contacts are provided by residues isoleucine 431–serine 433 and glutamate 484. Residues isoleucine 431–serine 433 and glutamate 484 contribute to the L-methionine site. 5-methyltetrahydropteroyltri-L-glutamate-binding positions include arginine 515–cysteine 516 and tryptophan 561. Position 599 (aspartate 599) interacts with L-homocysteine. Aspartate 599 provides a ligand contact to L-methionine. A 5-methyltetrahydropteroyltri-L-glutamate-binding site is contributed by glutamate 605. The Zn(2+) site is built by histidine 641, cysteine 643, and glutamate 665. Histidine 694 serves as the catalytic Proton donor. Residue cysteine 726 participates in Zn(2+) binding.

This sequence belongs to the vitamin-B12 independent methionine synthase family. Requires Zn(2+) as cofactor.

It carries out the reaction 5-methyltetrahydropteroyltri-L-glutamate + L-homocysteine = tetrahydropteroyltri-L-glutamate + L-methionine. It participates in amino-acid biosynthesis; L-methionine biosynthesis via de novo pathway; L-methionine from L-homocysteine (MetE route): step 1/1. Its function is as follows. Catalyzes the transfer of a methyl group from 5-methyltetrahydrofolate to homocysteine resulting in methionine formation. This is 5-methyltetrahydropteroyltriglutamate--homocysteine methyltransferase from Cronobacter sakazakii (strain ATCC BAA-894) (Enterobacter sakazakii).